Reading from the N-terminus, the 426-residue chain is G2/mitotic-specific cyclin-A (426 aa).

Positions 1-11 (MSMVHGSSFQI) are enriched in polar residues. A disordered region spans residues 1–22 (MSMVHGSSFQIAQDGENENQGV).

Belongs to the cyclin family. Cyclin AB subfamily.

Functionally, essential for the control of the cell cycle at the G2/M (mitosis) transition. Interacts with the CDC2 and CDK2 protein kinases to form MPF. G2/M cyclins accumulate steadily during G2 and are abruptly destroyed at mitosis. This Patella vulgata (Common limpet) protein is G2/mitotic-specific cyclin-A.